A 352-amino-acid chain; its full sequence is RNA-binding protein lark (352 aa).

RRM domains follow at residues 7–77 (FKLF…AAKS) and 86–156 (TKIF…VSTS). A CCHC-type zinc finger spans residues 168–185 (EQCYRCGRSGHWSKECPR). 2 disordered regions span residues 187–228 (YGSA…LRDR) and 254–352 (YQTS…YAPY). Residues serine 198 and serine 201 each carry the phosphoserine modification. Composition is skewed to pro residues over residues 214 to 224 (PYPPPPPPPPF) and 262 to 277 (FPPP…PLPP). Polar residues predominate over residues 279–288 (LSGSLRSCSV). Phosphoserine occurs at positions 315 and 325. A compositionally biased stretch (basic and acidic residues) spans 320–334 (GYEDFSRDAFDERMI).

Expressed in the CNS and in CCAP neurons of the ventral nervous system (VNS), which control insect ecdysis.

The protein resides in the cytoplasm. The protein localises to the nucleus. In terms of biological role, essential RNA-binding protein. May be required for circadian repression of eclosion. Also essential for nurse cell dumping during oogenesis, the process whereby the cytoplasmic contents of nurse cells are transferred to the oocyte late in it's development. This chain is RNA-binding protein lark (lark), found in Drosophila melanogaster (Fruit fly).